The primary structure comprises 344 residues: Type II methyltransferase M.FnuDI (344 aa).

The SAM-dependent MTase C5-type domain occupies 1-330; sequence MKLLSLFSGA…KRIKETLTDK (330 aa). Residue Cys71 is part of the active site.

This sequence belongs to the class I-like SAM-binding methyltransferase superfamily. C5-methyltransferase family.

It carries out the reaction a 2'-deoxycytidine in DNA + S-adenosyl-L-methionine = a 5-methyl-2'-deoxycytidine in DNA + S-adenosyl-L-homocysteine + H(+). In terms of biological role, a methylase, recognizes the double-stranded sequence 5'-GGCC-3', methylates C-? on both strands, and protects the DNA from cleavage by the FnuDI endonuclease. This is Type II methyltransferase M.FnuDI (fnuDIM) from Fusobacterium nucleatum.